Here is a 255-residue protein sequence, read N- to C-terminus: High-affinity branched-chain amino acid transport ATP-binding protein BraF (255 aa).

In terms of domain architecture, ABC transporter spans 6–254 (LEVSGLTMRF…PDVIKAYLGE (249 aa)). 38–45 (GPNGAGKT) is an ATP binding site.

This sequence belongs to the ABC transporter superfamily.

It is found in the cell inner membrane. Component of the high affinity leucine, isoleucine, valine, transport system (LIV-I), which is operative without Na(+) and is specific for alanine and threonine, in addition to branched-chain amino acids. The sequence is that of High-affinity branched-chain amino acid transport ATP-binding protein BraF (braF) from Pseudomonas aeruginosa (strain ATCC 15692 / DSM 22644 / CIP 104116 / JCM 14847 / LMG 12228 / 1C / PRS 101 / PAO1).